The following is a 618-amino-acid chain: NAD(P)H-quinone oxidoreductase subunit 5, organellar chromatophore 2 (618 aa).

Helical transmembrane passes span 16-36 (LIPI…TGWI), 43-63 (TPAY…SLAL), 99-119 (LAAL…ALGY), 129-149 (FFAL…SDSL), 152-172 (SYFL…FWYA), 190-210 (GDVM…GMEF), 220-240 (NTLT…GPIG), 267-287 (SVVV…LHHS), 291-311 (IAVL…VSIA), 318-335 (TLSY…IAIA), 348-368 (AHAI…AVSN), 390-410 (LIAG…CFGL), 419-438 (APWF…LNLT), 461-481 (WQMA…PWMM), 495-515 (AITG…GAIV), 553-573 (IVSG…NGFV), and 597-617 (SYIL…SWLV).

It belongs to the complex I subunit 5 family. In terms of assembly, NDH is composed of at least 16 different subunits, 5 of which are encoded in the nucleus.

It is found in the plastid. It localises to the organellar chromatophore thylakoid membrane. It catalyses the reaction a plastoquinone + NADH + (n+1) H(+)(in) = a plastoquinol + NAD(+) + n H(+)(out). The enzyme catalyses a plastoquinone + NADPH + (n+1) H(+)(in) = a plastoquinol + NADP(+) + n H(+)(out). In terms of biological role, NDH shuttles electrons from NAD(P)H:plastoquinone, via FMN and iron-sulfur (Fe-S) centers, to quinones in the photosynthetic chain and possibly in a chloroplast respiratory chain. The immediate electron acceptor for the enzyme in this species is believed to be plastoquinone. Couples the redox reaction to proton translocation, and thus conserves the redox energy in a proton gradient. The chain is NAD(P)H-quinone oxidoreductase subunit 5, organellar chromatophore 2 (ndhF2) from Paulinella chromatophora.